The sequence spans 992 residues: RNA-binding protein 12 (992 aa).

The RRM 1 domain occupies 304-379 (LYVSVHGMPF…RYVEVSPATE (76 aa)). Phosphoserine is present on residues Ser352 and Ser375. The tract at residues 393–424 (QSMGPSGQAHPPPQTLPRSKSPSGQKRSRSRS) is disordered. Positions 408-417 (LPRSKSPSGQ) are enriched in polar residues. A phosphoserine mark is found at Ser420, Ser422, and Ser424. One can recognise an RRM 2 domain in the interval 430–507 (FCVYLKGLPF…RFIQVHPITK (78 aa)). Residue Ser525 is modified to Phosphoserine. The disordered stretch occupies residues 849–913 (FGGIPQNFGN…PGFGASSGKP (65 aa)). Low complexity predominate over residues 876–887 (LGSVPGHLSGPP). The 77-residue stretch at 916 to 992 (TIIKVQNMPF…GSRKVKLVLG (77 aa)) folds into the RRM 3 domain.

It localises to the nucleus. The sequence is that of RNA-binding protein 12 (Rbm12) from Mus musculus (Mouse).